The sequence spans 130 residues: Large ribosomal subunit protein bL12 (130 aa).

The protein belongs to the bacterial ribosomal protein bL12 family. As to quaternary structure, homodimer. Part of the ribosomal stalk of the 50S ribosomal subunit. Forms a multimeric L10(L12)X complex, where L10 forms an elongated spine to which 2 to 4 L12 dimers bind in a sequential fashion. Binds GTP-bound translation factors.

Its function is as follows. Forms part of the ribosomal stalk which helps the ribosome interact with GTP-bound translation factors. Is thus essential for accurate translation. The polypeptide is Large ribosomal subunit protein bL12 (Thermobifida fusca (strain YX)).